Consider the following 318-residue polypeptide: RNA polymerase II transcription factor B subunit 3 (318 aa).

The segment at 13 to 54 adopts an RING-type zinc-finger fold; the sequence is CPLCQADRYLNPNMKLLINPECYHKMCESCVDRIFTTGPAQC.

One of the nine subunits forming the core-TFIIH basal transcription factor. Also interacts with skp1 and with the mcs2-mcs6 complex.

The protein localises to the cytoplasm. The protein resides in the nucleus. Acts as a component of the general transcription and DNA repair factor IIH (TFIIH or factor B), which is essential for both basal and activated transcription, and is involved in nucleotide excision repair (NER) of damaged DNA. TFIIH has CTD kinase activity and DNA-dependent ATPase activity, and is essential for polymerase II transcription. This Schizosaccharomyces pombe (strain 972 / ATCC 24843) (Fission yeast) protein is RNA polymerase II transcription factor B subunit 3 (pmh1).